The chain runs to 473 residues: Tryptophanase (473 aa).

K270 is subject to N6-(pyridoxal phosphate)lysine.

It belongs to the beta-eliminating lyase family. In terms of assembly, homotetramer. Requires pyridoxal 5'-phosphate as cofactor.

The enzyme catalyses L-tryptophan + H2O = indole + pyruvate + NH4(+). Its pathway is amino-acid degradation; L-tryptophan degradation via pyruvate pathway; indole and pyruvate from L-tryptophan: step 1/1. The sequence is that of Tryptophanase from Vibrio vulnificus (strain CMCP6).